Reading from the N-terminus, the 365-residue chain is 3-galactosyl-N-acetylglucosaminide 4-alpha-L-fucosyltransferase FUT3 (365 aa).

Topologically, residues 1-15 are cytoplasmic; the sequence is MYPPGCAKVKCSWHH. The chain crosses the membrane as a helical; Signal-anchor for type II membrane protein span at residues 16–34; the sequence is CLPGLLLQLLLALCFFSYL. The Lumenal portion of the chain corresponds to 35 to 365; it reads RMSQEKPKPK…TVPSIASWFQ (331 aa). Residues Asn100, Asn158, and Asn189 are each glycosylated (N-linked (GlcNAc...) asparagine).

Belongs to the glycosyltransferase 10 family. In terms of processing, glycosylated. In terms of tissue distribution, liver, kidney, lung and brain.

The protein resides in the golgi apparatus. It is found in the golgi stack membrane. It carries out the reaction a beta-D-galactosyl-(1-&gt;3)-N-acetyl-beta-D-glucosaminyl derivative + GDP-beta-L-fucose = a beta-D-galactosyl-(1-&gt;3)-[alpha-L-fucosyl-(1-&gt;4)]-N-acetyl-beta-D-glucosaminyl derivative + GDP + H(+). The catalysed reaction is an N-acetyl-alpha-neuraminyl-(2-&gt;3)-beta-D-galactosyl-(1-&gt;4)-N-acetyl-beta-D-glucosaminyl derivative + GDP-beta-L-fucose = an alpha-Neu5Ac-(2-&gt;3)-beta-D-Gal-(1-&gt;4)-[alpha-L-Fuc-(1-&gt;3)]-beta-D-GlcNAc derivative + GDP + H(+). It catalyses the reaction a beta-D-galactosyl-(1-&gt;4)-N-acetyl-beta-D-glucosaminyl derivative + GDP-beta-L-fucose = a beta-D-galactosyl-(1-&gt;4)-[alpha-L-fucosyl-(1-&gt;3)]-N-acetyl-beta-D-glucosaminyl derivative + GDP + H(+). The enzyme catalyses an alpha-Neu5Ac-(2-&gt;3)-beta-D-Gal-(1-&gt;4)-beta-D-GlcNAc-(1-&gt;3)-beta-D-Gal-(1-&gt;4)-[alpha-L-Fuc-(1-&gt;3)]-beta-D-GlcNAc derivative + GDP-beta-L-fucose = an alpha-Neu5Ac-(2-&gt;3)-beta-D-Gal-(1-&gt;4)-[alpha-L-Fuc-(1-&gt;3)]-beta-D-GlcNAc-(1-&gt;3)-beta-D-Gal-(1-&gt;4)-[alpha-L-Fuc-(1-&gt;3)]-beta-D-GlcNAc derivative + GDP + H(+). It carries out the reaction Lc4Cer + GDP-beta-L-fucose = a lactoside III(4)-a-Fuc-Lc4Cer + GDP + H(+). The catalysed reaction is a beta-D-Gal-(1-&gt;3)-beta-D-GlcNAc-(1-&gt;3)-beta-D-Gal-(1-&gt;4)-beta-D-Glc-(1&lt;-&gt;1')-Cer(d18:1(4E)) + GDP-beta-L-fucose = a III(4)-a-Fuc-Lc4Cer(d18:1(4E)) + GDP + H(+). It catalyses the reaction N-acetyl-alpha-neuraminosyl-(2-&gt;3)-beta-D-galactosyl-(1-&gt;3)-[N-acetyl-alpha-neuraminosyl-(2-&gt;6)]-N-acetyl-beta-D-glucosaminyl-(1-&gt;3)-beta-D-galactosyl-(1-&gt;4)-beta-D-glucosyl-(1&lt;-&gt;1')-N-acyl-sphing-4-enine + GDP-beta-L-fucose = N-acetyl-alpha-neuraminosyl-(2-&gt;3)-beta-D-galactosyl-(1-&gt;3)-alpha-L-fucosyl-(1-&gt;4)-[N-acetyl-alpha-neuraminosyl-(2-&gt;6)-N-acetyl-beta-D-glucosaminyl-(1-&gt;3)]-beta-D-galactosyl-(1-&gt;4)-beta-D-glucosyl-(1&lt;-&gt;1')-N-acyl-sphing-4-enine + GDP + H(+). The enzyme catalyses N-acetyl-alpha-neuraminosyl-(2-&gt;3)-beta-D-galactosyl-(1-&gt;3)-N-acetyl-beta-D-glucosaminyl-(1-&gt;3)-beta-D-galactosyl-(1-&gt;4)-beta-D-glucosyl-(1&lt;-&gt;1')-N-acyl-sphing-4-enine + GDP-beta-L-fucose = N-acetyl-alpha-neuraminosyl-(2-&gt;3)-beta-D-galactosyl-(1-&gt;3)-alpha-L-fucosyl-(1-&gt;4)-[N-acetyl-beta-D-glucosaminyl-(1-&gt;3)]-beta-D-galactosyl-(1-&gt;4)-beta-D-glucosyl-(1&lt;-&gt;1')-N-acyl-sphing-4-enine + GDP + H(+). It carries out the reaction beta-D-galactosyl-(1-&gt;3)-N-acetyl-D-glucosamine + GDP-beta-L-fucose = beta-D-galactosyl-(1-&gt;3)-[alpha-L-fucosyl-(1-&gt;4)]-N-acetyl-D-glucosamine + GDP + H(+). The catalysed reaction is alpha-L-Fuc-(1-&gt;2)-beta-D-Gal-(1-&gt;3)-D-GlcNAc + GDP-beta-L-fucose = alpha-L-Fuc-(1-&gt;2)-beta-D-Gal-(1-&gt;3)-[alpha-L-Fuc-(1-&gt;4)]-D-GlcNAc + GDP + H(+). It catalyses the reaction alpha-L-Fuc-(1-&gt;2)-beta-D-Gal-(1-&gt;4)-D-GlcNAc + GDP-beta-L-fucose = alpha-L-Fuc-(1-&gt;2)-beta-D-Gal-(1-&gt;4)-[alpha-L-Fuc-(1-&gt;3)]-D-GlcNAc + GDP + H(+). The enzyme catalyses beta-D-galactosyl-(1-&gt;4)-N-acetyl-D-glucosamine + GDP-beta-L-fucose = beta-D-galactosyl-(1-&gt;4)-[alpha-L-fucosyl-(1-&gt;3)]-N-acetyl-D-glucosamine + GDP + H(+). It carries out the reaction lactose + GDP-beta-L-fucose = beta-D-galactosyl-(1-&gt;4)-[alpha-L-fucosyl-(1-&gt;3)]-D-glucose + GDP + H(+). The catalysed reaction is an alpha-Neu5Ac-(2-&gt;3)-beta-D-Gal-(1-&gt;3)-D-GlcNAc derivative + GDP-beta-L-fucose = an alpha-Neu5Ac-(2-&gt;3)-beta-D-Gal-(1-&gt;3)-[alpha-L-Fuc-(1-&gt;4)]-beta-D-GlcNAc derivative + GDP + H(+). It participates in protein modification; protein glycosylation. In terms of biological role, catalyzes the transfer of L-fucose, from a guanosine diphosphate-beta-L-fucose, to both the subterminal N-acetyl glucosamine (GlcNAc) of type 1 chain (beta-D-Gal-(1-&gt;3)-beta-D-GlcNAc) glycolipids and oligosaccharides via an alpha(1,4) linkage, and the subterminal glucose (Glc) or GlcNAc of type 2 chain (beta-D-Gal-(1-&gt;4)-beta-D-GlcNAc) oligosaccharides via an alpha(1,3) linkage, independently of the presence of terminal alpha-L-fucosyl-(1,2) moieties on the terminal galactose of these acceptors and participates in the blood groups Lewis determination and expression of Lewis a (Le(a)), lewis b (Le(b)), Lewis x/SSEA-1 (Le(x)) and lewis y (Le(y)) antigens. Also catalyzes the transfer of L-fucose to subterminal GlcNAc of sialyl- and disialyl-lactotetraosylceramide to produce sialyl Lewis a (sLe(a)) and disialyl Lewis a via an alpha(1,4) linkage and therefore may regulate cell surface sialyl Lewis a expression and consequently regulates adhesive properties to E-selectin, cell proliferation and migration. Catalyzes the transfer of an L-fucose to 3'-sialyl-N-acetyllactosamine by an alpha(1,3) linkage, which allows the formation of sialyl-Lewis x structure and therefore may regulate the sialyl-Lewis x surface antigen expression and consequently adhesive properties to E-selectin. Prefers type 1 chain over type 2 acceptors. Type 1 tetrasaccharide is a better acceptor than type 1 disaccharide suggesting that a beta anomeric configuration of GlcNAc in the substrate is preferred. Lewis-positive (Le(+)) individuals have an active enzyme while Lewis-negative (Le(-)) individuals have an inactive enzyme. The chain is 3-galactosyl-N-acetylglucosaminide 4-alpha-L-fucosyltransferase FUT3 from Bos taurus (Bovine).